Reading from the N-terminus, the 411-residue chain is ATPase family AAA domain-containing protein 3C (411 aa).

177–184 is an ATP binding site; that stretch reads GPPGTGKT.

The protein belongs to the AAA ATPase family.

This Homo sapiens (Human) protein is ATPase family AAA domain-containing protein 3C (ATAD3C).